The sequence spans 296 residues: Nitrogenase iron protein (296 aa).

Residue 11–18 (GKGGIGKS) participates in ATP binding. Cys99 is a [4Fe-4S] cluster binding site. An ADP-ribosylarginine; by dinitrogenase reductase ADP-ribosyltransferase modification is found at Arg102. Cys134 contributes to the [4Fe-4S] cluster binding site.

It belongs to the NifH/BchL/ChlL family. Homodimer. [4Fe-4S] cluster is required as a cofactor. The reversible ADP-ribosylation of Arg-102 inactivates the nitrogenase reductase and regulates nitrogenase activity.

The catalysed reaction is N2 + 8 reduced [2Fe-2S]-[ferredoxin] + 16 ATP + 16 H2O = H2 + 8 oxidized [2Fe-2S]-[ferredoxin] + 2 NH4(+) + 16 ADP + 16 phosphate + 6 H(+). The key enzymatic reactions in nitrogen fixation are catalyzed by the nitrogenase complex, which has 2 components: the iron protein and the molybdenum-iron protein. In Dechloromonas aromatica (strain RCB), this protein is Nitrogenase iron protein.